A 278-amino-acid polypeptide reads, in one-letter code: Large ribosomal subunit protein uL2 (278 aa).

The segment at 223–278 (GSVMNPNDHPHGGGEGKAPIGHPSPMSPWGKKTLGKKTRDHKAKSEKFIVRHRRAK) is disordered. Over residues 255 to 264 (TLGKKTRDHK) the composition is skewed to basic residues.

This sequence belongs to the universal ribosomal protein uL2 family. Part of the 50S ribosomal subunit. Forms a bridge to the 30S subunit in the 70S ribosome.

Its function is as follows. One of the primary rRNA binding proteins. Required for association of the 30S and 50S subunits to form the 70S ribosome, for tRNA binding and peptide bond formation. It has been suggested to have peptidyltransferase activity; this is somewhat controversial. Makes several contacts with the 16S rRNA in the 70S ribosome. The protein is Large ribosomal subunit protein uL2 of Lacticaseibacillus paracasei (strain ATCC 334 / BCRC 17002 / CCUG 31169 / CIP 107868 / KCTC 3260 / NRRL B-441) (Lactobacillus paracasei).